A 125-amino-acid chain; its full sequence is Small ribosomal subunit protein uS12m (125 aa).

The tract at residues 1–24 (MPTSNQSIRHGREKKRRTDRTRAL) is disordered. Basic residues predominate over residues 9-19 (RHGREKKRRTD).

The protein belongs to the universal ribosomal protein uS12 family.

It is found in the mitochondrion. Its function is as follows. Protein S12 is involved in the translation initiation step. The protein is Small ribosomal subunit protein uS12m (RPS12) of Pinus sylvestris (Scotch pine).